A 214-amino-acid polypeptide reads, in one-letter code: Adenylate kinase (214 aa).

10-15 contributes to the ATP binding site; sequence GAGKGT. Residues 30–59 are NMP; the sequence is STGDMLRAAIKAGSELGQKAKILMDMGQLV. AMP is bound by residues Thr31, Arg36, 57–59, 85–88, and Gln92; these read QLV and GFPR. An LID region spans residues 122–159; the sequence is GRRVHPASGRTYHIVYNPPKVEDKDDITGEDLILRADD. ATP contacts are provided by residues Arg123 and 132 to 133; that span reads TY. Positions 156 and 167 each coordinate AMP. Gln200 serves as a coordination point for ATP.

Belongs to the adenylate kinase family. In terms of assembly, monomer.

The protein resides in the cytoplasm. The catalysed reaction is AMP + ATP = 2 ADP. Its pathway is purine metabolism; AMP biosynthesis via salvage pathway; AMP from ADP: step 1/1. In terms of biological role, catalyzes the reversible transfer of the terminal phosphate group between ATP and AMP. Plays an important role in cellular energy homeostasis and in adenine nucleotide metabolism. In Histophilus somni (strain 129Pt) (Haemophilus somnus), this protein is Adenylate kinase.